We begin with the raw amino-acid sequence, 453 residues long: Na(+)/H(+) antiporter NhaA (453 aa).

Transmembrane regions (helical) follow at residues 22 to 42 (ASLL…SPWA), 72 to 92 (MLAF…GLEI), 108 to 128 (LLPI…YMLV), 137 to 157 (GAAI…GLLG), 166 to 186 (IFLT…IALF), 189 to 209 (GHIA…LYVG), 218 to 238 (LFFY…GIHP), 316 to 336 (PLVN…VTFG), 343 to 363 (LVNV…LGIF), 386 to 406 (LFGV…IANL), and 424 to 444 (LGVF…LKWV).

Belongs to the NhaA Na(+)/H(+) (TC 2.A.33) antiporter family.

It localises to the cell inner membrane. It catalyses the reaction Na(+)(in) + 2 H(+)(out) = Na(+)(out) + 2 H(+)(in). Functionally, na(+)/H(+) antiporter that extrudes sodium in exchange for external protons. This chain is Na(+)/H(+) antiporter NhaA, found in Parabacteroides distasonis (strain ATCC 8503 / DSM 20701 / CIP 104284 / JCM 5825 / NCTC 11152).